The sequence spans 358 residues: Nicotinate-nucleotide--dimethylbenzimidazole phosphoribosyltransferase (358 aa).

E313 acts as the Proton acceptor in catalysis.

This sequence belongs to the CobT family.

It carries out the reaction 5,6-dimethylbenzimidazole + nicotinate beta-D-ribonucleotide = alpha-ribazole 5'-phosphate + nicotinate + H(+). It functions in the pathway nucleoside biosynthesis; alpha-ribazole biosynthesis; alpha-ribazole from 5,6-dimethylbenzimidazole: step 1/2. Functionally, catalyzes the synthesis of alpha-ribazole-5'-phosphate from nicotinate mononucleotide (NAMN) and 5,6-dimethylbenzimidazole (DMB). The protein is Nicotinate-nucleotide--dimethylbenzimidazole phosphoribosyltransferase of Corynebacterium glutamicum (strain ATCC 13032 / DSM 20300 / JCM 1318 / BCRC 11384 / CCUG 27702 / LMG 3730 / NBRC 12168 / NCIMB 10025 / NRRL B-2784 / 534).